The following is a 426-amino-acid chain: MKILLKGGRVIDPAQNLDGQMDLLLENGKIAAIAEAVGSVPEDTRLLDLKGMILLPGLVDMHTHLREPGYEYKETIRSGSEAAAVGGFTSIACMPNTLPVNDNRTVTEYILKRAKECDTVHVYPVAAVSRNSEGKILAEFGDLKEAGAIAFSDDGKPVMNSILMRRALEYASSLDRIIISHCEDLNLSAGGLMNEGKISTELGLPGIPTLAEDVMVARDLLLAEFSGAALHIAHVSSAGAVRMIRDAKKRGVRVTAETTPHYFTLTDEAVTNFNTNTKVSPPLRSREDLQAVREGLRDGTLDAIVTDHAPHALTDKEVEFEYAANGISGLETALALSLTLVDDGLLTLSELVRKMSVNPAKILNIPKGTLRPGADADITVLNPGKTWVVDPSNWRSQGKNTPFFGWTLKGKVIMTLVQGRIVYQED.

Positions 62 and 64 each coordinate Zn(2+). Residues 64-66 and asparagine 96 each bind substrate; that span reads HLR. Aspartate 154, histidine 181, histidine 234, and aspartate 307 together coordinate Zn(2+). Residue aspartate 307 is part of the active site. Histidine 311 is a substrate binding site.

It belongs to the metallo-dependent hydrolases superfamily. DHOase family. Class I DHOase subfamily. Zn(2+) is required as a cofactor.

The enzyme catalyses (S)-dihydroorotate + H2O = N-carbamoyl-L-aspartate + H(+). It participates in pyrimidine metabolism; UMP biosynthesis via de novo pathway; (S)-dihydroorotate from bicarbonate: step 3/3. Its function is as follows. Catalyzes the reversible cyclization of carbamoyl aspartate to dihydroorotate. The chain is Dihydroorotase from Syntrophus aciditrophicus (strain SB).